A 366-amino-acid chain; its full sequence is Protein FAM131A (366 aa).

Positions 342-366 (QRQASDLASSGVVSLDEDEAEPEEQ) are disordered. A compositionally biased stretch (acidic residues) spans 356-366 (LDEDEAEPEEQ).

The protein belongs to the FAM131 family.

The chain is Protein FAM131A (FAM131A) from Homo sapiens (Human).